The primary structure comprises 948 residues: ELKS/Rab6-interacting/CAST family member 1 (948 aa).

The disordered stretch occupies residues 1–54 (MYGSARSVGKVEPSSQSPGRSPRLPRSPRLGHRRTNSTGGSSGNSVGGGSGKTL). Residue Lys-10 is modified to N6-acetyllysine. Residues 13–28 (PSSQSPGRSPRLPRSP) show a composition bias toward low complexity. A phosphoserine mark is found at Ser-17, Ser-21, and Ser-37. Phosphothreonine is present on Thr-38. Positions 40 to 51 (GSSGNSVGGGSG) are enriched in gly residues. Phosphoserine is present on residues Ser-55, Ser-75, Ser-94, Ser-796, and Ser-937. Residues 144-920 (RQARDNTIMD…RMKLMADNYE (777 aa)) adopt a coiled-coil conformation. Basic and acidic residues predominate over residues 773 to 796 (KHKEQVEKKKSAQMLEEARRREDS). Disordered regions lie at residues 773–801 (KHKE…SDSS) and 903–948 (QLKQ…GIWA). Residues 939–948 (DQDEEEGIWA) are compositionally biased toward acidic residues.

In terms of assembly, interacts with the GTB-bound forms of RAB6A isoform 1 and isoform 2 and with RAB6B. The interaction was strongest with RAB6B, followed by RAB6A isoform 2 and weakest with RAB6A isoform 1. Part of a complex with CHUK, IKBKB and IKBKG. Interacts with CHUK, IKBKB and IKBKG. The interaction with IKBKG is independent of CHUK and IKBKB. Interacts with NFKBIA. Isoform 1 interacts through its C-terminus with the PDZ domains of RIMS1 and RIMS2. Interacts with ERC2/CAST1. Interacts with SDCCAG8. Part of a cortical microtubule stabilization complex (CMSC) composed of KANK1, PPFIA1, PPFIBP1, ERC1/ELKS, PHLDB2/LL5beta, CLASPs, KIF21A and possibly additional interactors; within CMSCs KANK1 and PHLDB2/LL5beta appear to be the core components for targeting of microtubule-binding proteins KIF21A and CLASPs, whereas PPFIA1, PPFIBP1 and ERC1/ELKS serve as scaffolds for protein clustering. Isoform 1 is specifically expressed in brain. A further probable isoform is widely expressed outside of brain It is referred to as ERC1a by PubMed:12391317 and characterized by a C-terminus identical to that of isoforms 1 in human and mouse.

Its subcellular location is the cytoplasm. It is found in the cytoskeleton. The protein localises to the microtubule organizing center. It localises to the centrosome. The protein resides in the membrane. Its subcellular location is the golgi apparatus membrane. It is found in the presynaptic active zone. The protein localises to the cell projection. It localises to the podosome. Functionally, regulatory subunit of the IKK complex. Probably recruits IkappaBalpha/NFKBIA to the complex. May be involved in the organization of the cytomatrix at the nerve terminals active zone (CAZ) which regulates neurotransmitter release. May be involved in vesicle trafficking at the CAZ. May be involved in Rab-6 regulated endosomes to Golgi transport. The protein is ELKS/Rab6-interacting/CAST family member 1 (Erc1) of Rattus norvegicus (Rat).